We begin with the raw amino-acid sequence, 423 residues long: Gamma-glutamyl phosphate reductase (423 aa).

It belongs to the gamma-glutamyl phosphate reductase family.

The protein localises to the cytoplasm. It catalyses the reaction L-glutamate 5-semialdehyde + phosphate + NADP(+) = L-glutamyl 5-phosphate + NADPH + H(+). The protein operates within amino-acid biosynthesis; L-proline biosynthesis; L-glutamate 5-semialdehyde from L-glutamate: step 2/2. Catalyzes the NADPH-dependent reduction of L-glutamate 5-phosphate into L-glutamate 5-semialdehyde and phosphate. The product spontaneously undergoes cyclization to form 1-pyrroline-5-carboxylate. This chain is Gamma-glutamyl phosphate reductase, found in Desulfovibrio desulfuricans (strain ATCC 27774 / DSM 6949 / MB).